The chain runs to 234 residues: 1-(5-phosphoribosyl)-5-[(5-phosphoribosylamino)methylideneamino] imidazole-4-carboxamide isomerase (234 aa).

The Proton acceptor role is filled by aspartate 8. The Proton donor role is filled by aspartate 128.

Belongs to the HisA/HisF family.

It is found in the cytoplasm. It catalyses the reaction 1-(5-phospho-beta-D-ribosyl)-5-[(5-phospho-beta-D-ribosylamino)methylideneamino]imidazole-4-carboxamide = 5-[(5-phospho-1-deoxy-D-ribulos-1-ylimino)methylamino]-1-(5-phospho-beta-D-ribosyl)imidazole-4-carboxamide. Its pathway is amino-acid biosynthesis; L-histidine biosynthesis; L-histidine from 5-phospho-alpha-D-ribose 1-diphosphate: step 4/9. The protein is 1-(5-phosphoribosyl)-5-[(5-phosphoribosylamino)methylideneamino] imidazole-4-carboxamide isomerase of Cenarchaeum symbiosum (strain A).